We begin with the raw amino-acid sequence, 400 residues long: Large envelope protein (400 aa).

Methionine 1 bears the N-acetylmethionine mark. Disordered stretches follow at residues 1–55 (MGGW…WPEA) and 85–118 (LTTVPAAPPPASTNRQSGRQPTPISPPLRDSHPQ). Residue glycine 2 is the site of N-myristoyl glycine; by host attachment. A pre-S1 region spans residues 2 to 119 (GGWSSKPRQG…PPLRDSHPQA (118 aa)). Residues 2-174 (GGWSSKPRQG…FSRTGDPAPN (173 aa)) form a pre-S region. Over 2–181 (GGWSSKPRQG…APNMESTTSG (180 aa)) the chain is Virion surface; in external conformation. Residues 2–253 (GGWSSKPRQG…PGYRWMCLRR (252 aa)) lie on the Intravirion; in internal conformation side of the membrane. Tryptophan 4 is a glycosylation site (N-linked (GlcNAc...) asparagine). The segment covering 96–106 (STNRQSGRQPT) has biased composition (polar residues). The interval 120-174 (MQWNSTTFHQALLDPRVKGLYFPAGGSSSGTVNPVPTTASPISSIFSRTGDPAPN) is pre-S2. A helical membrane pass occupies residues 182–202 (FLGPLLVLQAGFFLLTRILTI). Residues 203-253 (PQSLDSWWTSLNFLGGAPTCPGQNSQSPTSNHSPTSCPPICPGYRWMCLRR) lie on the Intravirion; in external conformation side of the membrane. The chain crosses the membrane as a helical span at residues 254-274 (FIIFLFILLLCLIFLLVLLDF). The Virion surface portion of the chain corresponds to 275-348 (QGMLPVCPLL…WASVRFSWLS (74 aa)). Asparagine 320 is a glycosylation site (N-linked (GlcNAc...) asparagine; by host). The helical transmembrane segment at 349 to 369 (LLVPFVQWFAGLSPTVWLSVI) threads the bilayer. Residues 370-375 (WMMWYW) lie on the Intravirion side of the membrane. A helical transmembrane segment spans residues 376–398 (GPSLYNILSPFLPLLPIFFCLWV). Over 399 to 400 (YI) the chain is Virion surface.

The protein belongs to the orthohepadnavirus major surface antigen family. In terms of assembly, in its internal form (Li-HBsAg), interacts with the capsid protein and with the isoform S. Interacts with host chaperone CANX. As to quaternary structure, associates with host chaperone CANX through its pre-S2 N glycan; this association may be essential for isoform M proper secretion. Interacts with isoform L. Interacts with the antigens of satellite virus HDV (HDVAgs); this interaction is required for encapsidation of HDV genomic RNA. Post-translationally, isoform M is N-terminally acetylated by host at a ratio of 90%, and N-glycosylated by host at the pre-S2 region. Myristoylated.

It is found in the virion membrane. Its function is as follows. The large envelope protein exists in two topological conformations, one which is termed 'external' or Le-HBsAg and the other 'internal' or Li-HBsAg. In its external conformation the protein attaches the virus to cell receptors and thereby initiating infection. This interaction determines the species specificity and liver tropism. This attachment induces virion internalization predominantly through caveolin-mediated endocytosis. The large envelope protein also assures fusion between virion membrane and endosomal membrane. In its internal conformation the protein plays a role in virion morphogenesis and mediates the contact with the nucleocapsid like a matrix protein. In terms of biological role, the middle envelope protein plays an important role in the budding of the virion. It is involved in the induction of budding in a nucleocapsid independent way. In this process the majority of envelope proteins bud to form subviral lipoprotein particles of 22 nm of diameter that do not contain a nucleocapsid. The protein is Large envelope protein of Hepatitis B virus genotype C subtype ar (isolate Japan/S-207/1988) (HBV-C).